The chain runs to 463 residues: Asparagine--tRNA ligase (463 aa).

It belongs to the class-II aminoacyl-tRNA synthetase family. As to quaternary structure, homodimer.

It localises to the cytoplasm. The enzyme catalyses tRNA(Asn) + L-asparagine + ATP = L-asparaginyl-tRNA(Asn) + AMP + diphosphate + H(+). This is Asparagine--tRNA ligase from Nostoc sp. (strain PCC 7120 / SAG 25.82 / UTEX 2576).